A 473-amino-acid chain; its full sequence is Ribulose bisphosphate carboxylase large chain (473 aa).

A propeptide spanning residues 1–2 is cleaved from the precursor; sequence MS. The substrate site is built by Asn123 and Thr173. Lys175 (proton acceptor) is an active-site residue. Lys177 serves as a coordination point for substrate. Mg(2+)-binding residues include Lys201, Asp203, and Glu204. Lys201 is modified (N6-carboxylysine). The residue at position 208 (Ser208) is a Phosphoserine. His294 (proton acceptor) is an active-site residue. Arg295 and His327 together coordinate substrate. The residue at position 330 (Thr330) is a Phosphothreonine. Residue Ser379 participates in substrate binding.

It belongs to the RuBisCO large chain family. Type I subfamily. In terms of assembly, heterohexadecamer of 8 large chains and 8 small chains; disulfide-linked. The disulfide link is formed within the large subunit homodimers. Requires Mg(2+) as cofactor. In terms of processing, the disulfide bond which can form in the large chain dimeric partners within the hexadecamer appears to be associated with oxidative stress and protein turnover.

The protein localises to the plastid. The protein resides in the chloroplast. The enzyme catalyses 2 (2R)-3-phosphoglycerate + 2 H(+) = D-ribulose 1,5-bisphosphate + CO2 + H2O. It catalyses the reaction D-ribulose 1,5-bisphosphate + O2 = 2-phosphoglycolate + (2R)-3-phosphoglycerate + 2 H(+). Functionally, ruBisCO catalyzes two reactions: the carboxylation of D-ribulose 1,5-bisphosphate, the primary event in carbon dioxide fixation, as well as the oxidative fragmentation of the pentose substrate in the photorespiration process. Both reactions occur simultaneously and in competition at the same active site. The chain is Ribulose bisphosphate carboxylase large chain from Sinapis alba (White mustard).